Reading from the N-terminus, the 661-residue chain is Ubiquitin-associated and SH3 domain-containing protein A (661 aa).

A UBA domain is found at 15-60 (KLKSRSSPSLLEPLLAMGFPVHTALKALAATGRKTAEEALAWLHDH). One can recognise an SH3 domain in the interval 276–341 (VHYQTLRALF…PENYTDRASE (66 aa)). The segment at 395–661 (RKSVLVVRHG…FNWRNWISGN (267 aa)) is phosphatase-like.

Homodimer or homooligomer. Interacts with CBL. Part of a complex containing CBL and activated EGFR. Interacts with ubiquitin and with mono-ubiquitinated proteins. Interacts with dynamin. Highest expression of UBASH3A in tissues belonging to the immune system, including spleen, peripheral blood leukocytes, thymus and bone marrow.

It localises to the cytoplasm. The protein localises to the nucleus. Interferes with CBL-mediated down-regulation and degradation of receptor-type tyrosine kinases. Promotes accumulation of activated target receptors, such as T-cell receptors, EGFR and PDGFRB, on the cell surface. Exhibits negligible protein tyrosine phosphatase activity at neutral pH. May act as a dominant-negative regulator of UBASH3B-dependent dephosphorylation. May inhibit dynamin-dependent endocytic pathways by functionally sequestering dynamin via its SH3 domain. The sequence is that of Ubiquitin-associated and SH3 domain-containing protein A (UBASH3A) from Homo sapiens (Human).